A 24-amino-acid chain; its full sequence is AEVYNKDGNKLDIYGKAVGLHYFS.

The protein belongs to the Gram-negative porin family. Homotrimer.

The protein resides in the cell outer membrane. Its function is as follows. Forms pores that allow passive diffusion of small molecules across the outer membrane. This chain is Outer membrane protein, found in Sodalis glossinidius.